The primary structure comprises 63 residues: uncharacterized protein (63 aa).

A helical transmembrane segment spans residues 20–40 (IVLLISFIFFFGRFIYSSVGA).

Its subcellular location is the membrane. This is an uncharacterized protein from Escherichia coli O157:H7.